The following is a 481-amino-acid chain: Halobacterial transducer protein 9 (481 aa).

Positions 10-81 (SPFTVPLLLN…NKVADTPIDA (72 aa)) constitute a PAS domain. In terms of domain architecture, Methyl-accepting transducer spans 208–444 (DVERLEAASQ…EIAAMVDETA (237 aa)).

The protein belongs to the methyl-accepting chemotaxis (MCP) protein family.

The protein resides in the cytoplasm. Functionally, potentially involved in chemo- or phototactic signal transduction. This is Halobacterial transducer protein 9 (htr9) from Halobacterium salinarum (strain ATCC 700922 / JCM 11081 / NRC-1) (Halobacterium halobium).